The chain runs to 90 residues: Small ribosomal subunit protein bS20 (90 aa).

The protein belongs to the bacterial ribosomal protein bS20 family.

In terms of biological role, binds directly to 16S ribosomal RNA. The sequence is that of Small ribosomal subunit protein bS20 from Rickettsia akari (strain Hartford).